A 444-amino-acid polypeptide reads, in one-letter code: Tol-Pal system protein TolB (444 aa).

Positions Met1–Ala19 are cleaved as a signal peptide.

Belongs to the TolB family. The Tol-Pal system is composed of five core proteins: the inner membrane proteins TolA, TolQ and TolR, the periplasmic protein TolB and the outer membrane protein Pal. They form a network linking the inner and outer membranes and the peptidoglycan layer.

It localises to the periplasm. Part of the Tol-Pal system, which plays a role in outer membrane invagination during cell division and is important for maintaining outer membrane integrity. This Rickettsia africae (strain ESF-5) protein is Tol-Pal system protein TolB.